The sequence spans 236 residues: Phospholipid hydroperoxide glutathione peroxidase, chloroplastic (236 aa).

The transit peptide at Met1–Thr64 directs the protein to the chloroplast. Cys111 is an active-site residue.

It belongs to the glutathione peroxidase family.

The protein resides in the plastid. The protein localises to the chloroplast stroma. The enzyme catalyses a hydroperoxy polyunsaturated fatty acid + 2 glutathione = a hydroxy polyunsaturated fatty acid + glutathione disulfide + H2O. Its function is as follows. Protects cells and enzymes from oxidative damage, by catalyzing the reduction of hydrogen peroxide, lipid peroxides and organic hydroperoxide, by glutathione. This Pisum sativum (Garden pea) protein is Phospholipid hydroperoxide glutathione peroxidase, chloroplastic.